Here is a 102-residue protein sequence, read N- to C-terminus: Small ribosomal subunit protein uS10 (102 aa).

The protein belongs to the universal ribosomal protein uS10 family. As to quaternary structure, part of the 30S ribosomal subunit.

Its function is as follows. Involved in the binding of tRNA to the ribosomes. This is Small ribosomal subunit protein uS10 from Sulfurisphaera tokodaii (strain DSM 16993 / JCM 10545 / NBRC 100140 / 7) (Sulfolobus tokodaii).